A 337-amino-acid polypeptide reads, in one-letter code: Mitochondrial uncoupling protein 6 (337 aa).

Solcar repeat units follow at residues 4-136 (KPFL…LKRR), 145-236 (FPLV…VKEI), and 246-331 (GGIG…VRGL). Helical transmembrane passes span 6 to 26 (FLEGGIAAIIAGALTHPLDLI), 105 to 125 (PAALFSGVSATILRQMLYSAT), 151 to 171 (ITAGLIAGAVGSVVGNPADVA), 210 to 230 (RGSWLTVNRAMIVTASQLATY), 252 to 272 (VAASFAAGIVAAVASNPIDVV), and 304 to 324 (YKGLVPTATRQGPFTMILFLT).

Belongs to the mitochondrial carrier (TC 2.A.29) family.

The protein resides in the mitochondrion inner membrane. Functionally, PUMPS are mitochondrial transporter proteins that create proton leaks across the inner mitochondrial membrane, thus uncoupling oxidative phosphorylation. This leads to a decrease in the efficiency of oxidative phosphorylation and an increase in heat production. May be involved in protecting plant cells against oxidative stress damage. Recombinant PUMP6, reconstituted into liposomes, transports a wide range of dicarboxylic acids including malate, oxaloacetate and succinate as well as phosphate, sulfate and thiosulfate. However, it is unknown if these transports are of any biological significance in vivo. In Arabidopsis thaliana (Mouse-ear cress), this protein is Mitochondrial uncoupling protein 6 (PUMP6).